A 164-amino-acid polypeptide reads, in one-letter code: Transcription antitermination protein NusB (164 aa).

It belongs to the NusB family.

Its function is as follows. Involved in transcription antitermination. Required for transcription of ribosomal RNA (rRNA) genes. Binds specifically to the boxA antiterminator sequence of the ribosomal RNA (rrn) operons. The sequence is that of Transcription antitermination protein NusB from Desulfovibrio desulfuricans (strain ATCC 27774 / DSM 6949 / MB).